A 539-amino-acid chain; its full sequence is Glutamyl-tRNA(Gln) amidotransferase subunit B, mitochondrial (539 aa).

Belongs to the GatB/GatE family. GatB subfamily. In terms of assembly, subunit of the heterotrimeric GatFAB amidotransferase (AdT) complex, composed of A, B and F subunits.

The protein resides in the mitochondrion. The catalysed reaction is L-glutamyl-tRNA(Gln) + L-glutamine + ATP + H2O = L-glutaminyl-tRNA(Gln) + L-glutamate + ADP + phosphate + H(+). Allows the formation of correctly charged Gln-tRNA(Gln) through the transamidation of misacylated Glu-tRNA(Gln) in the mitochondria. The reaction takes place in the presence of glutamine and ATP through an activated gamma-phospho-Glu-tRNA(Gln). This Kluyveromyces lactis (strain ATCC 8585 / CBS 2359 / DSM 70799 / NBRC 1267 / NRRL Y-1140 / WM37) (Yeast) protein is Glutamyl-tRNA(Gln) amidotransferase subunit B, mitochondrial.